The primary structure comprises 317 residues: 8-oxo-(d)GTP phosphatase (317 aa).

Residues 15 to 148 enclose the Nudix hydrolase domain; that stretch reads RIVYAAGAVL…DRKVLCRFAK (134 aa). Substrate-binding positions include 43–46, aspartate 48, and 53–55; these read RPRY and KGK. Lysine 53, glutamate 69, and glutamate 73 together coordinate Mg(2+). The short motif at 54 to 75 is the Nudix box element; the sequence is GKVDPGETAPVGAVREILEETG. Substrate contacts are provided by tyrosine 89, lysine 99, glutamate 118, and tyrosine 136. Glutamate 118 provides a ligand contact to Mg(2+).

The protein belongs to the Nudix hydrolase family. It depends on Mg(2+) as a cofactor.

The enzyme catalyses 8-oxo-dGTP + H2O = 8-oxo-dGDP + phosphate + H(+). The catalysed reaction is 8-oxo-GTP + H2O = 8-oxo-GDP + phosphate + H(+). Functionally, catalyzes the conversion of 8-oxo-dGTP to 8-oxo-dGDP, and 8-oxo-GTP to 8-oxo-GDP. This chain is 8-oxo-(d)GTP phosphatase, found in Mycobacterium tuberculosis (strain CDC 1551 / Oshkosh).